We begin with the raw amino-acid sequence, 133 residues long: MNKFKLIVTTPERVLISGEVSRVLCKNAVGEFEILAGHQPYLTATVPTVTRIDDENGESKYLFTSTGLMKVQNNEVTFCVNSAEWPEEIDEARAMNAKQRAEERLKNKTDELDKKRAKLALARAMSRLKLKEM.

The protein belongs to the ATPase epsilon chain family. In terms of assembly, F-type ATPases have 2 components, CF(1) - the catalytic core - and CF(0) - the membrane proton channel. CF(1) has five subunits: alpha(3), beta(3), gamma(1), delta(1), epsilon(1). CF(0) has three main subunits: a, b and c.

Its subcellular location is the cell membrane. Functionally, produces ATP from ADP in the presence of a proton gradient across the membrane. The sequence is that of ATP synthase epsilon chain from Clostridium perfringens (strain SM101 / Type A).